Consider the following 424-residue polypeptide: Zinc finger and BTB domain-containing protein 6 (424 aa).

The 65-residue stretch at 33–97 (CDVSIYINDT…CYTGALEVKR (65 aa)) folds into the BTB domain. Ser202 carries the phosphoserine modification. 4 C2H2-type zinc fingers span residues 301–323 (HQCPRCPRGFLHVENYLRHLKMH), 326–348 (FLCLQCGKTFTQKKNLNRHIRGH), 354–376 (FQCTVCLKTFTAKSTLQDHLNIH), and 382–405 (YKCHCCDMDFKHKSALKKHLTSLH). The segment at 403–424 (SLHGRSSGEKLPRHDLERQNLL) is disordered. Residues 408–424 (SSGEKLPRHDLERQNLL) are compositionally biased toward basic and acidic residues.

Its subcellular location is the nucleus. Functionally, may be involved in transcriptional regulation. This is Zinc finger and BTB domain-containing protein 6 (ZBTB6) from Bos taurus (Bovine).